The following is an 855-amino-acid chain: Inactive rhomboid protein 1 (855 aa).

The tract at residues 1–36 is disordered; that stretch reads MSEARRDSTSSLQRKKPPWLKLDIPSAVPPTAEEPS. The Cytoplasmic portion of the chain corresponds to 1-411; the sequence is MSEARRDSTS…HRPFFTYWLT (411 aa). 2 positions are modified to phosphoserine: serine 76 and serine 176. 2 positions are modified to phosphothreonine: threonine 180 and threonine 183. Serine 390 is modified (phosphoserine). Residues 412-432 traverse the membrane as a helical segment; it reads FVHSLVTILAVCIYGIAPVGF. The Lumenal segment spans residues 433-655; that stretch reads SQHETVDSVL…NPEVPDQFYR (223 aa). An N-linked (GlcNAc...) asparagine glycan is attached at asparagine 583. A helical transmembrane segment spans residues 656-676; it reads LWLSLFLHAGILHCLVSICFQ. Residues 677–691 are Cytoplasmic-facing; it reads MTVLRDLEKLAGWHR. A helical transmembrane segment spans residues 692–712; that stretch reads IAIIYLLSGVTGNLASAIFLP. Over 713 to 714 the chain is Lumenal; sequence YR. The chain crosses the membrane as a helical span at residues 715–735; sequence AEVGPAGSQFGILACLFVELF. The Cytoplasmic portion of the chain corresponds to 736–746; the sequence is QSWQILARPWR. Residues 747–767 form a helical membrane-spanning segment; that stretch reads AFFKLLAVVLFLFTFGLLPWI. Over 768–772 the chain is Lumenal; the sequence is DNFAH. A helical membrane pass occupies residues 773 to 793; it reads ISGFISGLFLSFAFLPYISFG. Residues 794–803 are Cytoplasmic-facing; the sequence is KFDLYRKRCQ. The helical transmembrane segment at 804–824 threads the bilayer; that stretch reads IIIFQVVFLGLLAGLVVLFYF. Over 825–855 the chain is Lumenal; it reads YPVRCEWCEFLTCIPFTDKFCEKYELDAQLH.

It belongs to the peptidase S54 family. In terms of assembly, homodimer, or homooligomer. Interacts with TGFA and HBEGF. Interacts with EGF; may retain EGF in the endoplasmic reticulum and regulates its degradation through the endoplasmic reticulum-associated degradation (ERAD). Interacts (via cytoplasmic N-terminus) with FRMD8/iTAP; this interaction leads to mutual protein stabilization. Interacts with ADAM17/TACE.

It localises to the endoplasmic reticulum membrane. The protein localises to the golgi apparatus membrane. In terms of biological role, regulates ADAM17 protease, a sheddase of the epidermal growth factor (EGF) receptor ligands and TNF, thereby plays a role in sleep, cell survival, proliferation, migration and inflammation. Does not exhibit any protease activity on its own. The protein is Inactive rhomboid protein 1 (RHBDF1) of Papio anubis (Olive baboon).